The sequence spans 82 residues: NADH-ubiquinone oxidoreductase 9.5 kDa subunit (82 aa).

The helical transmembrane segment at 25 to 43 (AYFYSCVIAGLGPVFLTVV) threads the bilayer.

This sequence belongs to the complex I NDUFA3 subunit family. Complex I is composed of about 40 different subunits.

It is found in the mitochondrion inner membrane. In terms of biological role, accessory subunit of the mitochondrial membrane respiratory chain NADH dehydrogenase (Complex I), that is believed not to be involved in catalysis. Complex I functions in the transfer of electrons from NADH to the respiratory chain. The immediate electron acceptor for the enzyme is believed to be ubiquinone. This subunit binds ubiquinone. In Neurospora crassa (strain ATCC 24698 / 74-OR23-1A / CBS 708.71 / DSM 1257 / FGSC 987), this protein is NADH-ubiquinone oxidoreductase 9.5 kDa subunit (nuo9.5).